The primary structure comprises 252 residues: Sororin (252 aa).

Disordered stretches follow at residues 1-48 (MSGR…WPKT) and 72-142 (AVQS…SKKV). Phosphoserine occurs at positions 21, 33, 35, 75, 79, and 83. A compositionally biased stretch (basic and acidic residues) spans 86-104 (LEKENEPPGRELTKEDLFK). A KEN box motif is present at residues 88-90 (KEN). Thr98 carries the phosphothreonine modification. Over residues 105-116 (THSVPATPTSTP) the composition is skewed to low complexity. A Phosphoserine modification is found at Ser107. Phosphothreonine occurs at positions 111 and 115. Residues 124–140 (SSSKEGELDARDLEMSK) show a composition bias toward basic and acidic residues. A Phosphoserine modification is found at Ser154. Thr159 is modified (phosphothreonine). Positions 166-168 (FGF) match the FGF motif motif. A disordered region spans residues 199-222 (WAPDMTLPGISPPPEKQKRKKKKM). Phosphoserine is present on Ser209. The segment at 230-252 (LDEWAAAMNAEFEAAEQFDLLVE) is C-terminal Sororin domain.

It belongs to the sororin family. As to quaternary structure, interacts with the APC/C complex. Interacts with the chromatin-bound cohesin complex; the interaction is indirect, occurs after DNA replication and requires acetylation of the cohesin component SMC3. Interacts (via the FGF motif) with PDS5A and PDS5B; the interaction is direct and prevents the interaction of PDS5A with WAPL. In terms of processing, phosphorylated. Phosphorylation, as cells enter mitosis, disrupts the interaction with PDS5A and relieves the inhibition of WAPL by CDCA5. Ubiquitinated by the APC/C complex in G1, leading to its degradation.

The protein localises to the nucleus. Its subcellular location is the chromosome. The protein resides in the cytoplasm. In terms of biological role, regulator of sister chromatid cohesion in mitosis stabilizing cohesin complex association with chromatin. May antagonize the action of WAPL which stimulates cohesin dissociation from chromatin. Cohesion ensures that chromosome partitioning is accurate in both meiotic and mitotic cells and plays an important role in DNA repair. Required for efficient DNA double-stranded break repair. This chain is Sororin (CDCA5), found in Homo sapiens (Human).